Here is a 1577-residue protein sequence, read N- to C-terminus: Pentafunctional AROM polypeptide (1577 aa).

A 3-dehydroquinate synthase region spans residues 1 to 384 (MSMKMADPTK…YEPKASVVSN (384 aa)). Residues 48–50 (DTN), 85–88 (ENSK), 116–118 (GGV), and Asp121 each bind NAD(+). Arg132 lines the 7-phospho-2-dehydro-3-deoxy-D-arabino-heptonate pocket. 141-142 (TT) is an NAD(+) binding site. Positions 148 and 154 each coordinate 7-phospho-2-dehydro-3-deoxy-D-arabino-heptonate. Residue Lys163 coordinates NAD(+). Asn164 is a binding site for 7-phospho-2-dehydro-3-deoxy-D-arabino-heptonate. NAD(+) is bound by residues 181 to 184 (FIDT) and Asn192. Glu196 is a binding site for Zn(2+). 7-phospho-2-dehydro-3-deoxy-D-arabino-heptonate-binding positions include 196–199 (EVIK) and Lys250. Glu260 serves as the catalytic Proton acceptor; for 3-dehydroquinate synthase activity. 7-phospho-2-dehydro-3-deoxy-D-arabino-heptonate-binding positions include 264 to 268 (RNLLN) and His271. His271 is a binding site for Zn(2+). His275 serves as the catalytic Proton acceptor; for 3-dehydroquinate synthase activity. 2 residues coordinate 7-phospho-2-dehydro-3-deoxy-D-arabino-heptonate: His287 and Lys356. Residue His287 participates in Zn(2+) binding. Positions 397-842 (VIPGVPKSLN…WDALKQKFGV (446 aa)) are EPSP synthase. Catalysis depends on Cys824, which acts as the For EPSP synthase activity. Residues 864-1056 (NASVIIIGMR…RKKRLSFFVS (193 aa)) form a shikimate kinase region. Residue 871–878 (GMRGAGKT) participates in ATP binding. A 3-dehydroquinase region spans residues 1057–1277 (LTLPDLRDTG…AAPGQLSAAE (221 aa)). Residue His1180 is the Proton acceptor; for 3-dehydroquinate dehydratase activity of the active site. Lys1208 (schiff-base intermediate with substrate; for 3-dehydroquinate dehydratase activity) is an active-site residue. The segment at 1290–1577 (AKKFAIFGKP…RNAVLGTNEK (288 aa)) is shikimate dehydrogenase.

The protein in the N-terminal section; belongs to the sugar phosphate cyclases superfamily. Dehydroquinate synthase family. This sequence in the 2nd section; belongs to the EPSP synthase family. It in the 3rd section; belongs to the shikimate kinase family. In the 4th section; belongs to the type-I 3-dehydroquinase family. The protein in the C-terminal section; belongs to the shikimate dehydrogenase family. Homodimer. Zn(2+) serves as cofactor.

It is found in the cytoplasm. It carries out the reaction 7-phospho-2-dehydro-3-deoxy-D-arabino-heptonate = 3-dehydroquinate + phosphate. The enzyme catalyses 3-dehydroquinate = 3-dehydroshikimate + H2O. The catalysed reaction is shikimate + NADP(+) = 3-dehydroshikimate + NADPH + H(+). It catalyses the reaction shikimate + ATP = 3-phosphoshikimate + ADP + H(+). It carries out the reaction 3-phosphoshikimate + phosphoenolpyruvate = 5-O-(1-carboxyvinyl)-3-phosphoshikimate + phosphate. The protein operates within metabolic intermediate biosynthesis; chorismate biosynthesis; chorismate from D-erythrose 4-phosphate and phosphoenolpyruvate: step 2/7. It participates in metabolic intermediate biosynthesis; chorismate biosynthesis; chorismate from D-erythrose 4-phosphate and phosphoenolpyruvate: step 3/7. It functions in the pathway metabolic intermediate biosynthesis; chorismate biosynthesis; chorismate from D-erythrose 4-phosphate and phosphoenolpyruvate: step 4/7. Its pathway is metabolic intermediate biosynthesis; chorismate biosynthesis; chorismate from D-erythrose 4-phosphate and phosphoenolpyruvate: step 5/7. The protein operates within metabolic intermediate biosynthesis; chorismate biosynthesis; chorismate from D-erythrose 4-phosphate and phosphoenolpyruvate: step 6/7. The AROM polypeptide catalyzes 5 consecutive enzymatic reactions in prechorismate polyaromatic amino acid biosynthesis. This chain is Pentafunctional AROM polypeptide, found in Talaromyces stipitatus (strain ATCC 10500 / CBS 375.48 / QM 6759 / NRRL 1006) (Penicillium stipitatum).